The following is a 710-amino-acid chain: Dynein axonemal assembly factor 3 homolog (710 aa).

A disordered region spans residues 403–487; sequence GAEAGAGAGP…DSDPAAAAST (85 aa). Residues 404-416 show a composition bias toward gly residues; it reads AEAGAGAGPGGEA. Positions 417–438 are enriched in low complexity; the sequence is AAGASSSSGKEEAAAAAAAGKE. Over residues 453–462 the composition is skewed to gly residues; sequence SGSGAPGAGT. Positions 478 to 487 are enriched in low complexity; it reads DSDPAAAAST.

The protein belongs to the DNAAF3 family.

Its subcellular location is the cytoplasm. In terms of biological role, required for the assembly of axonemal inner and outer dynein arms. Involved in preassembly of dyneins into complexes before their transport into cilia. The sequence is that of Dynein axonemal assembly factor 3 homolog (DAB1) from Chlamydomonas reinhardtii (Chlamydomonas smithii).